Reading from the N-terminus, the 51-residue chain is Ribosome biogenesis protein Nop10 (51 aa).

Belongs to the NOP10 family.

Involved in ribosome biogenesis; more specifically in 18S rRNA pseudouridylation and in cleavage of pre-rRNA. This is Ribosome biogenesis protein Nop10 from Methanococcus maripaludis (strain C7 / ATCC BAA-1331).